A 205-amino-acid polypeptide reads, in one-letter code: Ferritin heavy chain (205 aa).

The first 19 residues, 1 to 19, serve as a signal peptide directing secretion; it reads MVKLIASLLLLAVVAQAYG. A Ferritin-like diiron domain is found at 35–190; it reads VDMKDACIKG…GKLTTLKKMM (156 aa). Cysteine 41 and cysteine 150 form a disulfide bridge. The Fe cation site is built by glutamate 52, glutamate 87, histidine 90, glutamate 136, and glutamine 172.

Belongs to the ferritin family. Oligomer of 12 light (L) chains and 12 heavy (H) chains; L and H chains are disulfide-linked. The functional molecule forms a roughly spherical shell with a diameter of 12 nm and contains a central cavity into which the insoluble ferric iron core is deposited. In terms of tissue distribution, expressed in hemolymph and gut (at protein level). Expressed in the head (at protein level). Expressed in thorax and abdomen.

It localises to the golgi apparatus. The protein localises to the secreted. The enzyme catalyses 4 Fe(2+) + O2 + 4 H(+) = 4 Fe(3+) + 2 H2O. In terms of biological role, stores iron in a soluble, non-toxic, readily available form. Important for iron homeostasis. Iron is taken up in the ferrous form and deposited as ferric hydroxides after oxidation. Ferritin is composed of a heavy (H) chain which is responsible for the oxidation and uptake of ferrous iron, and a light (L) chain which facilitates the nucleation of the ferrihydrite iron core. Required for dietary iron absorption in the midgut. Involved in tissue iron detoxification by exporting excess iron. Functions as an antioxidant and protects the developing organs from cell-mediated ferroptosis. Required for embryo and larval development. Plays a role in blood cell (haemocyte) differentiation in the lymph gland at the larval stage. May also store Zn(2+) and Mn(2+) and thus may play a role in zinc and manganese homeostasis. The sequence is that of Ferritin heavy chain from Drosophila melanogaster (Fruit fly).